Consider the following 92-residue polypeptide: Small ribosomal subunit protein uS19 (92 aa).

This sequence belongs to the universal ribosomal protein uS19 family.

Protein S19 forms a complex with S13 that binds strongly to the 16S ribosomal RNA. The chain is Small ribosomal subunit protein uS19 from Rhodopseudomonas palustris (strain HaA2).